Consider the following 88-residue polypeptide: MIAAEQKKQIISNFARKAGDTGSTEVQIALIDARIKELNEHFKSHKKDFHSKTGLLRLVGKRKKLLDYLKRTELDRYKKLIETLGLRK.

The protein belongs to the universal ribosomal protein uS15 family. Part of the 30S ribosomal subunit. Forms a bridge to the 50S subunit in the 70S ribosome, contacting the 23S rRNA.

Its function is as follows. One of the primary rRNA binding proteins, it binds directly to 16S rRNA where it helps nucleate assembly of the platform of the 30S subunit by binding and bridging several RNA helices of the 16S rRNA. Forms an intersubunit bridge (bridge B4) with the 23S rRNA of the 50S subunit in the ribosome. The protein is Small ribosomal subunit protein uS15 of Leptospira borgpetersenii serovar Hardjo-bovis (strain JB197).